The sequence spans 4367 residues: Guanylate cyclase (4367 aa).

Residues 1–10 (MKKTRTTAAE) show a composition bias toward polar residues. A disordered region spans residues 1-70 (MKKTRTTAAE…MSFLQGKHQQ (70 aa)). Over 1–150 (MKKTRTTAAE…FKNLWEQFHR (150 aa)) the chain is Cytoplasmic. Basic and acidic residues predominate over residues 19–33 (PHDEHRGRGREHGGA). The span at 54–63 (HQATQKQMSF) shows a compositional bias: polar residues. The chain crosses the membrane as a helical span at residues 151–171 (VINWWFLVMAIIQAIPQLHYN). Over 172 to 174 (PNH) the chain is Extracellular. Residues 175–195 (AWSTALPFAIVLVFGMLKDAF) form a helical membrane-spanning segment. The Cytoplasmic segment spans residues 196-373 (TDLGRRERDR…GFKRPHIEKD (178 aa)). The helical transmembrane segment at 374–394 (INTYLFISFFIVFLTILISVM) threads the bilayer. Residues 395 to 452 (SKWSVQERDSGDTGVTDAGASSGSGSSSGETSQTYGSSVEFMLGSRDLLQNPWMSILR) are Extracellular-facing. Residues 402–426 (RDSGDTGVTDAGASSGSGSSSGETS) are disordered. The segment covering 407-426 (TGVTDAGASSGSGSSSGETS) has biased composition (low complexity). The helical transmembrane segment at 453 to 473 (FLAVYAPVLPLSLPLILDVVY) threads the bilayer. Topologically, residues 474–2258 (LLQSVLIEGD…VHGRLSLMRV (1785 aa)) are cytoplasmic. Disordered regions lie at residues 486 to 535 (IRGG…QQPL), 550 to 699 (SEKF…ISGR), 831 to 918 (ETSA…ASSL), 932 to 966 (RLEE…PQLA), 980 to 1047 (VGIQ…GELS), 1079 to 1164 (GMSF…MPAV), 1344 to 1593 (PSGT…SLKS), 1607 to 1652 (FRRG…TGTG), 1773 to 1861 (GGRG…GLRS), and 1881 to 1946 (DKQH…PQHL). Over residues 523–535 (AHSSQNASLQQPL) the composition is skewed to polar residues. Composition is skewed to basic and acidic residues over residues 605–628 (ETLR…REQL) and 670–679 (RRSDDRDRKS). Low complexity predominate over residues 850 to 863 (SAASSRSQSAPASA). Polar residues predominate over residues 880-892 (QTLTNQQTGQQSP). The segment covering 906 to 917 (ASPGAADSPASS) has biased composition (low complexity). The span at 932–948 (RLEETGSQKEEDSRSDR) shows a compositional bias: basic and acidic residues. The segment covering 983–996 (QSQHSSQSLLSSRQ) has biased composition (low complexity). Over residues 1025 to 1047 (DRMYSRDYHRESRSSSPRDGELS) the composition is skewed to basic and acidic residues. Polar residues-rich tracts occupy residues 1084 to 1094 (SRPSSQFTFSS) and 1117 to 1130 (RSLT…TASP). The segment covering 1344–1357 (PSGTSASSGAPSGP) has biased composition (low complexity). Gly residues-rich tracts occupy residues 1370–1381 (QGQGHGSLGAPG) and 1389–1400 (CLGGAGGSGARG). Residues 1443 to 1454 (VPSPRPLSPAGP) show a composition bias toward pro residues. The segment covering 1527 to 1542 (SFKEKHEEFAFSKDED) has biased composition (basic and acidic residues). Residues 1543-1567 (TATVDQDDTQSATDEEHDVEGEEEE) are compositionally biased toward acidic residues. Over residues 1583 to 1593 (SASASLMSLKS) the composition is skewed to low complexity. Polar residues-rich tracts occupy residues 1628 to 1652 (GRSS…TGTG), 1779 to 1791 (VSLS…SSAK), and 1843 to 1852 (VNPSGQTYSQ). Residues 1881 to 1922 (DKQHQRGHGPEGDEGSHELEGHDAHTGDSHGGHHRDQAEPRA) show a composition bias toward basic and acidic residues. Residues 1933–1942 (RLPQKTQNRL) show a composition bias toward polar residues. A helical membrane pass occupies residues 2259 to 2279 (STVILWSFFKSLCIGLPTFLF). Residues 2280–2289 (QPQAFWSAVE) are Extracellular-facing. The chain crosses the membrane as a helical span at residues 2290-2310 (VYDPLLLMIVDFFWTTLPGII). Residues 2311 to 2343 (HGYSDQDLPTHLLPSVPVLYTPGRRRLYFNGFR) lie on the Cytoplasmic side of the membrane. A helical transmembrane segment spans residues 2344–2364 (FILWTVEGIIYSFLIFYLLQA). Topologically, residues 2365–2376 (TWMDGNTFHDGQ) are extracellular. A helical transmembrane segment spans residues 2377-2397 (VLGFHSYGILLLFGSLLQSNV). Residues 2398 to 2408 (RIILETSLWTP) are Cytoplasmic-facing. A helical membrane pass occupies residues 2409–2429 (TFLFTTIVLCTIMFFPTVLLY). Residues 2430-2444 (SVTGWPRRYMELAGR) lie on the Extracellular side of the membrane. The helical transmembrane segment at 2445-2465 (VVFAWPMLYFLIPLWVSIGIL) threads the bilayer. Over 2466 to 2724 (VQLLLQVFTS…LKRLVPWYRV (259 aa)) the chain is Cytoplasmic. A helical membrane pass occupies residues 2725–2745 (IFMLIALYQLLSFLTEYFIDI). Residues 2746–2762 (HWNPGETEMEPWMCVPT) are Extracellular-facing. A helical transmembrane segment spans residues 2763–2783 (LVVEIGFAAVVVCTFYDFIFL). The Cytoplasmic segment spans residues 2784–2785 (DH). A helical membrane pass occupies residues 2786-2806 (FSLILNSIVFLMVSSSIVFYT). Residues 2807–2823 (ASHVDGTLTSVLFPVFT) lie on the Extracellular side of the membrane. The chain crosses the membrane as a helical span at residues 2824 to 2844 (FVILRISFLQAVVWNILFLIV). The Cytoplasmic portion of the chain corresponds to 2845-2858 (TVARFMLDKKYLPP). The chain crosses the membrane as a helical span at residues 2859–2879 (LNFVHYIPLFIGIDVFVAFVG). At 2880 to 2903 (YRLEYNQRKSFLLDYSVDASRRKQ) the chain is on the extracellular side. The helical transmembrane segment at 2904–2924 (REILNTMLPSFVVDQMINSEL) threads the bilayer. The Cytoplasmic portion of the chain corresponds to 2925–3693 (NEEGIPTSLK…RTHFYNNKSN (769 aa)). One can recognise a Guanylate cyclase 1 domain in the interval 2942 to 3150 (SVIFCDVYEF…DTVNTASRMK (209 aa)). 6 disordered regions span residues 3214-3245 (DVIS…ASSG), 3359-3402 (GQTE…SRFD), 3456-3475 (SGDE…EVPL), 3485-3508 (QARE…HTPT), 3523-3596 (GCAA…ETEK), and 3620-3653 (FRRR…VDDE). Residues 3383-3402 (RADRRPAGRREDSRGDSRFD) show a composition bias toward basic and acidic residues. Basic and acidic residues-rich tracts occupy residues 3485 to 3499 (QARE…KRSG), 3529 to 3541 (EEEK…RESE), and 3549 to 3569 (TESR…DARE). Over residues 3626–3637 (AAPSEAASPSSA) the composition is skewed to low complexity. The chain crosses the membrane as a helical span at residues 3694 to 3714 (INTIEQALIIFLVTFCVQTLT). Over 3715 to 3736 (RLALPRFYVVCSHHTINLHVCT) the chain is Extracellular. A helical membrane pass occupies residues 3737 to 3757 (GLYWAVRATYTLAAFVLWMLF). Over 3758 to 3772 (HYRNRKEVATCLELR) the chain is Cytoplasmic. Residues 3773–3793 (WMVFLLNLLFISASCVFALSN) traverse the membrane as a helical segment. At 3794–3895 (SWGVCGQQQE…GSDLVTANGR (102 aa)) the chain is on the extracellular side. Residues 3896-3916 (AYTYWLLSDTIELFFYIVILH) form a helical membrane-spanning segment. Residues 3917–3921 (HNTGL) are Cytoplasmic-facing. The helical transmembrane segment at 3922–3942 (LFQNCILVDVLLMTMSLTFII) threads the bilayer. Residues 3943–3950 (TTARETAS) lie on the Extracellular side of the membrane. Residues 3951-3971 (TVSTIATFPCYVFFNLVSAYC) traverse the membrane as a helical segment. The Cytoplasmic segment spans residues 3972 to 4367 (KEYIDRLTFY…GSTPGSALGS (396 aa)). A Guanylate cyclase 2 domain is found at 4024 to 4159 (TFLFADICGF…MDVLTGNMME (136 aa)). Positions 4029, 4030, and 4073 each coordinate Mg(2+). The tract at residues 4292 to 4367 (ASHGDSGPSD…GSTPGSALGS (76 aa)) is disordered. A compositionally biased stretch (basic and acidic residues) spans 4333–4344 (DGLKQLRKEIER). Polar residues predominate over residues 4356–4367 (DIGSTPGSALGS).

In the N-terminal section; belongs to the cation transport ATPase (P-type) (TC 3.A.3) family. Type IV subfamily. It in the C-terminal section; belongs to the adenylyl cyclase class-4/guanylyl cyclase family. As to quaternary structure, interacts with chaperone CDC50.1; the interaction regulates guanylate cyclase GC trafficking and sensing environmental changes. Interacts with UGO; the interaction regulates guanylate cyclase GC trafficking and catalytic activity. The cofactor is Mg(2+). Mn(2+) is required as a cofactor.

The protein resides in the cell membrane. The catalysed reaction is GTP = 3',5'-cyclic GMP + diphosphate. In terms of biological role, catalyzes the synthesis of the second messenger cGMP from GTP. During the tachyzoite lytic growth cycle in host cells, detects and transduces environmental changes in potassium, phosphatidic acid and pH levels. By producing cGMP in response to these environmental changes, activates PKG and thereby regulates PKG-dependent microneme secretion which is essential for tachyzoite motility, host cell attachment invasion of and egress from host cells. May play a role in the fission of connected tachyzoites at their basal pole during egress. Does not display flippase activity towards phosphatidylserine, phosphatidic acid or phosphatidylcholine. This is Guanylate cyclase from Toxoplasma gondii (strain ATCC 50853 / GT1).